A 344-amino-acid polypeptide reads, in one-letter code: MSVVVRHDWDRKELHALFALPFPELLHRAASVHRAHFDPAEVQVSTLLSVKTGGCPEDCAYCPQAQRYDTGVSAQKLMDTEDVVAKARQAKAAGASRFCMGAAWRSPKDRDIPKVAAMIREVKAMGLETCATLGMLDAGQARALKDAGLDYYNHNLDTAPDYYDSIIHTRQYQDRLNTLEHVRDVGLKTCCGGIVGMGETREHRVGLLHALATLPAHPDSVPINQLVQVPGTPLHGTEPLDAFEFVRMIAVARIAMPKSMVRLSAGREAMSDELQALCFLAGANSIFYGEKLLTTGNPDTERDQGLFQRLGLRPMQITVDAAEHDHPGTVHADITCGAACEHAA.

Residues 40–267 (AEVQVSTLLS…KSMVRLSAGR (228 aa)) enclose the Radical SAM core domain. [4Fe-4S] cluster is bound by residues Cys55, Cys59, and Cys62. Positions 99, 130, 190, and 262 each coordinate [2Fe-2S] cluster.

The protein belongs to the radical SAM superfamily. Biotin synthase family. Homodimer. [4Fe-4S] cluster is required as a cofactor. It depends on [2Fe-2S] cluster as a cofactor.

The enzyme catalyses (4R,5S)-dethiobiotin + (sulfur carrier)-SH + 2 reduced [2Fe-2S]-[ferredoxin] + 2 S-adenosyl-L-methionine = (sulfur carrier)-H + biotin + 2 5'-deoxyadenosine + 2 L-methionine + 2 oxidized [2Fe-2S]-[ferredoxin]. Its pathway is cofactor biosynthesis; biotin biosynthesis; biotin from 7,8-diaminononanoate: step 2/2. Its function is as follows. Catalyzes the conversion of dethiobiotin (DTB) to biotin by the insertion of a sulfur atom into dethiobiotin via a radical-based mechanism. The polypeptide is Biotin synthase (Xanthomonas campestris pv. campestris (strain 8004)).